Reading from the N-terminus, the 121-residue chain is Ribosome-binding factor A (121 aa).

It belongs to the RbfA family. As to quaternary structure, monomer. Binds 30S ribosomal subunits, but not 50S ribosomal subunits or 70S ribosomes.

It is found in the cytoplasm. One of several proteins that assist in the late maturation steps of the functional core of the 30S ribosomal subunit. Associates with free 30S ribosomal subunits (but not with 30S subunits that are part of 70S ribosomes or polysomes). Required for efficient processing of 16S rRNA. May interact with the 5'-terminal helix region of 16S rRNA. The protein is Ribosome-binding factor A of Heliobacterium modesticaldum (strain ATCC 51547 / Ice1).